The chain runs to 312 residues: Magnesium protoporphyrin IX methyltransferase, chloroplastic (312 aa).

The transit peptide at 1–39 (MPFAPSLLSSSSSVSQFLPRFPNATRFNVTPRSRAATVV) directs the protein to the chloroplast.

Belongs to the class I-like SAM-binding methyltransferase superfamily. Magnesium protoporphyrin O-methyltransferase family.

It is found in the plastid. The protein resides in the chloroplast membrane. Its subcellular location is the chloroplast thylakoid membrane. The enzyme catalyses Mg-protoporphyrin IX + S-adenosyl-L-methionine = Mg-protoporphyrin IX 13-monomethyl ester + S-adenosyl-L-homocysteine. Its pathway is porphyrin-containing compound metabolism; chlorophyll biosynthesis. With respect to regulation, regulated by the folate status via an increased concentration of S-adenosyl-homocysteine (AdoHcy), a potent inhibitor of most AdoMet-dependent methyltransferases. Its function is as follows. Converts Mg-protoporphyrin IX to Mg-protoporphyrin IX methylester using S-adenosyl-L-methionine as a cofactor. Involved in chloroplast-to-nucleus signaling by acting as a negative effector of nuclear photosynthetic gene expression. The sequence is that of Magnesium protoporphyrin IX methyltransferase, chloroplastic (CHLM) from Arabidopsis thaliana (Mouse-ear cress).